Consider the following 535-residue polypeptide: NEDD8-activating enzyme E1 regulatory subunit (535 aa).

The tract at residues 332-345 is interaction with UBA3; the sequence is DMIADSSKFIKLQN.

This sequence belongs to the ubiquitin-activating E1 family. ULA1 subfamily. In terms of assembly, heterodimer of UBA3 and NAE1. The complex binds NEDD8 and UBE2M.

It participates in protein modification; protein neddylation. Regulatory subunit of the dimeric UBA3-NAE1 E1 enzyme. E1 activates NEDD8 by first adenylating its C-terminal glycine residue with ATP, thereafter linking this residue to the side chain of the catalytic cysteine, yielding a NEDD8-UBA3 thioester and free AMP. E1 finally transfers NEDD8 to the catalytic cysteine of UBE2M. The covalent attachment of NEDD8 to target proteins is known as 'neddylation' and the process is involved in the regulation of cell growth, viability and development. The protein is NEDD8-activating enzyme E1 regulatory subunit (NAE1) of Gallus gallus (Chicken).